A 431-amino-acid chain; its full sequence is MAKIINVIGREIMDSRGNPTVEAEVHLEGGFIGMAAAPSGASTGSREALELRDGDKSRYLGKGVLTAVANVNGPIRTALIGKDATAQAELDQIMIDLDGTENKDKLGANAILAVSLAAAKAAAAFKGMPLYAHIAELNGTPGQYAMPVPMMNILNGGEHADNNVDIQEFMVQPVGAKNFREALRMGAEIFHTLKKVLHGKGLSTSVGDEGGFAPNLSSNADALAVIKEAVELAGYKLGTDVTLALDCAASEFYKDGKYDLAGEGKVFDSNGFSDFLKSLTEQYPIVSIEDGLDESDWDGWAYQTQIMGDKIQLVGDDLFVTNTKILTRGIENGIANSILIKFNQIGSLTETLAAIRMAKAAGYTAVISHRSGETEDATIADLAVGTAAGQIKTGSLCRSDRVAKYNQLLRIEEQLGEKAPYRGLKEIKGQA.

Residue glutamine 167 coordinates (2R)-2-phosphoglycerate. The active-site Proton donor is the glutamate 209. Mg(2+) is bound by residues aspartate 246, glutamate 289, and aspartate 316. 4 residues coordinate (2R)-2-phosphoglycerate: lysine 341, arginine 370, serine 371, and lysine 392. The active-site Proton acceptor is lysine 341.

This sequence belongs to the enolase family. In terms of assembly, component of the RNA degradosome, a multiprotein complex involved in RNA processing and mRNA degradation. The cofactor is Mg(2+).

It is found in the cytoplasm. Its subcellular location is the secreted. It localises to the cell surface. It carries out the reaction (2R)-2-phosphoglycerate = phosphoenolpyruvate + H2O. The protein operates within carbohydrate degradation; glycolysis; pyruvate from D-glyceraldehyde 3-phosphate: step 4/5. In terms of biological role, catalyzes the reversible conversion of 2-phosphoglycerate (2-PG) into phosphoenolpyruvate (PEP). It is essential for the degradation of carbohydrates via glycolysis. This is Enolase from Shewanella oneidensis (strain ATCC 700550 / JCM 31522 / CIP 106686 / LMG 19005 / NCIMB 14063 / MR-1).